The following is a 431-amino-acid chain: Aspartate--tRNA(Asp/Asn) ligase (431 aa).

Glutamate 170 contributes to the L-aspartate binding site. The interval 192–195 (QLYK) is aspartate. Arginine 214 is an L-aspartate binding site. ATP-binding positions include 214-216 (RAE), 222-224 (RHL), and glutamate 354. Positions 354 and 357 each coordinate Mg(2+). Residues serine 357 and arginine 361 each contribute to the L-aspartate site. Residue 402–405 (GLER) participates in ATP binding.

The protein belongs to the class-II aminoacyl-tRNA synthetase family. Type 2 subfamily. As to quaternary structure, homodimer. The cofactor is Mg(2+).

It is found in the cytoplasm. The enzyme catalyses tRNA(Asx) + L-aspartate + ATP = L-aspartyl-tRNA(Asx) + AMP + diphosphate. Its function is as follows. Aspartyl-tRNA synthetase with relaxed tRNA specificity since it is able to aspartylate not only its cognate tRNA(Asp) but also tRNA(Asn). Reaction proceeds in two steps: L-aspartate is first activated by ATP to form Asp-AMP and then transferred to the acceptor end of tRNA(Asp/Asn). This is Aspartate--tRNA(Asp/Asn) ligase from Methanopyrus kandleri (strain AV19 / DSM 6324 / JCM 9639 / NBRC 100938).